The sequence spans 178 residues: Vegetative protein (178 aa).

2 disordered regions span residues 67–102 (AGRR…AAAG) and 138–158 (NRRP…DIKL). The span at 76–90 (PAARSAVTAAPAAVG) shows a compositional bias: low complexity.

This chain is Vegetative protein (vegA), found in Myxococcus xanthus.